A 67-amino-acid chain; its full sequence is Large ribosomal subunit protein bL35 (67 aa).

Over residues 1–16 (MPKMKTKKSAAKRFRV) the composition is skewed to basic residues. The interval 1-22 (MPKMKTKKSAAKRFRVRPGGTV) is disordered.

It belongs to the bacterial ribosomal protein bL35 family.

This Methylibium petroleiphilum (strain ATCC BAA-1232 / LMG 22953 / PM1) protein is Large ribosomal subunit protein bL35.